The primary structure comprises 413 residues: ORC1-type DNA replication protein 10 (413 aa).

Residues 63–67 (VGKTA), Tyr211, and Arg223 contribute to the ATP site.

The protein belongs to the CDC6/cdc18 family.

Its function is as follows. Involved in regulation of DNA replication. The protein is ORC1-type DNA replication protein 10 (orc10) of Halobacterium salinarum (strain ATCC 700922 / JCM 11081 / NRC-1) (Halobacterium halobium).